Consider the following 1557-residue polypeptide: ABC transporter atnG (1557 aa).

A run of 5 helical transmembrane segments spans residues 27-47, 70-90, 99-119, 131-151, and 159-179; these read FTLY…LILA, LKLL…AFWM, LTIA…YLIH, IISI…RTIW, and VSAI…LETW. 2 N-linked (GlcNAc...) asparagine glycosylation sites follow: asparagine 202 and asparagine 249. 6 consecutive transmembrane segments (helical) span residues 256–276, 311–331, 385–405, 412–432, 490–510, and 531–551; these read AGAM…AGVF, ATLL…ATAT, YIHD…LLYN, IAPI…AMMA, LLIA…IVSF, and LTSL…VESI. Positions 279 to 556 constitute an ABC transmembrane type-1 1 domain; that stretch reads LCQSGFIISQ…LVESISETAM (278 aa). The 237-residue stretch at 593–829 folds into the ABC transporter 1 domain; that stretch reads AFEVDVGWKN…LDYIQGFAIA (237 aa). 625–632 serves as a coordination point for ATP; the sequence is GAVGCGKT. A glycan (N-linked (GlcNAc...) asparagine) is linked at asparagine 667. A helical membrane pass occupies residues 882–902; sequence LVYFGLMAIFVFLQAFPTVWV. One can recognise an ABC transmembrane type-1 2 domain in the interval 882 to 1162; sequence LVYFGLMAIF…LITDWTVLET (281 aa). Residue asparagine 916 is glycosylated (N-linked (GlcNAc...) asparagine). Helical transmembrane passes span 921 to 941, 996 to 1016, 1020 to 1040, and 1105 to 1125; these read IGVY…TACF, AVLQ…IIAV, YITA…TFYM, and LSLV…GIAV. Residue asparagine 1132 is glycosylated (N-linked (GlcNAc...) asparagine). A helical transmembrane segment spans residues 1135–1155; it reads SLGLALVNVVSLSASVKALIT. The ABC transporter 2 domain maps to 1199-1431; it reads VEYKNVSAFY…PSVFRELYKS (233 aa). Residues asparagine 1203 and asparagine 1218 are each glycosylated (N-linked (GlcNAc...) asparagine). 1233 to 1240 is a binding site for ATP; sequence GRSGSGKS. Disordered stretches follow at residues 1439-1464 and 1503-1557; these read ERQE…EELR and RTRS…RGLH. The span at 1507–1522 shows a compositional bias: basic and acidic residues; it reads RSRDHSAERRESKRYS.

This sequence belongs to the ABC transporter superfamily. ABCC family. Conjugate transporter (TC 3.A.1.208) subfamily.

It localises to the cell membrane. In terms of biological role, ABC transporter; part of the gene cluster that mediates the biosynthesis of aspercryptins, linear lipopeptides built from six amino acids including 2 highly unusual and nonproteogenic amino acids, 2-amino-octanoic acid (2aoa) and 2-amino-dodecanol (2adol). This is ABC transporter atnG from Emericella nidulans (strain FGSC A4 / ATCC 38163 / CBS 112.46 / NRRL 194 / M139) (Aspergillus nidulans).